The chain runs to 150 residues: FAD synthase (150 aa).

ATP contacts are provided by residues 11–12 (TF), 16–19 (HPGH), Asp-96, and Tyr-124.

This sequence belongs to the archaeal FAD synthase family. As to quaternary structure, homodimer. A divalent metal cation is required as a cofactor.

The enzyme catalyses FMN + ATP + H(+) = FAD + diphosphate. It participates in cofactor biosynthesis; FAD biosynthesis; FAD from FMN: step 1/1. Catalyzes the transfer of the AMP portion of ATP to flavin mononucleotide (FMN) to produce flavin adenine dinucleotide (FAD) coenzyme. The protein is FAD synthase of Methanocaldococcus fervens (strain DSM 4213 / JCM 15782 / AG86) (Methanococcus fervens).